The chain runs to 949 residues: Glycine dehydrogenase (decarboxylating) (949 aa).

An N6-(pyridoxal phosphate)lysine modification is found at K702.

The protein belongs to the GcvP family. The glycine cleavage system is composed of four proteins: P, T, L and H. Requires pyridoxal 5'-phosphate as cofactor.

It carries out the reaction N(6)-[(R)-lipoyl]-L-lysyl-[glycine-cleavage complex H protein] + glycine + H(+) = N(6)-[(R)-S(8)-aminomethyldihydrolipoyl]-L-lysyl-[glycine-cleavage complex H protein] + CO2. In terms of biological role, the glycine cleavage system catalyzes the degradation of glycine. The P protein binds the alpha-amino group of glycine through its pyridoxal phosphate cofactor; CO(2) is released and the remaining methylamine moiety is then transferred to the lipoamide cofactor of the H protein. The protein is Glycine dehydrogenase (decarboxylating) of Rhodococcoides fascians (Rhodococcus fascians).